Consider the following 453-residue polypeptide: CCA-adding enzyme (453 aa).

Positions 53 and 56 each coordinate ATP. CTP contacts are provided by Ser-53 and Lys-56. Asp-65, Asp-67, and Asp-119 together coordinate Mg(2+). ATP-binding residues include His-142, Lys-161, and Tyr-170. CTP-binding residues include His-142, Lys-161, and Tyr-170.

It belongs to the tRNA nucleotidyltransferase/poly(A) polymerase family. Archaeal CCA-adding enzyme subfamily. As to quaternary structure, homodimer. It depends on Mg(2+) as a cofactor.

It catalyses the reaction a tRNA precursor + 2 CTP + ATP = a tRNA with a 3' CCA end + 3 diphosphate. The enzyme catalyses a tRNA with a 3' CCA end + 2 CTP + ATP = a tRNA with a 3' CCACCA end + 3 diphosphate. Catalyzes the addition and repair of the essential 3'-terminal CCA sequence in tRNAs without using a nucleic acid template. Adds these three nucleotides in the order of C, C, and A to the tRNA nucleotide-73, using CTP and ATP as substrates and producing inorganic pyrophosphate. tRNA 3'-terminal CCA addition is required both for tRNA processing and repair. Also involved in tRNA surveillance by mediating tandem CCA addition to generate a CCACCA at the 3' terminus of unstable tRNAs. While stable tRNAs receive only 3'-terminal CCA, unstable tRNAs are marked with CCACCA and rapidly degraded. This is CCA-adding enzyme from Pyrococcus furiosus (strain ATCC 43587 / DSM 3638 / JCM 8422 / Vc1).